A 114-amino-acid polypeptide reads, in one-letter code: BolA-like protein DDB_G0274169 (114 aa).

Residues 88–98 are compositionally biased toward polar residues; sequence TQWKKNNQTKI. The tract at residues 88-114 is disordered; the sequence is TQWKKNNQTKINVDDDKSPSCKGGFGK.

This sequence belongs to the BolA/IbaG family.

This is BolA-like protein DDB_G0274169 from Dictyostelium discoideum (Social amoeba).